Consider the following 361-residue polypeptide: Probable mannitol dehydrogenase (361 aa).

Zn(2+) contacts are provided by Cys51, His73, Cys104, Cys107, Cys110, Cys118, and Cys167.

This sequence belongs to the zinc-containing alcohol dehydrogenase family. Requires Zn(2+) as cofactor.

It catalyses the reaction D-mannitol + NAD(+) = D-mannose + NADH + H(+). Functionally, oxidizes mannitol to mannose. Provides the initial step by which translocated mannitol is committed to central metabolism and, by regulating mannitol pool size, is important in regulating salt tolerance at the cellular level. In Mesembryanthemum crystallinum (Common ice plant), this protein is Probable mannitol dehydrogenase (ELI3).